The following is a 389-amino-acid chain: ATP-dependent (S)-NAD(P)H-hydrate dehydratase (389 aa).

The YjeF C-terminal domain maps to 53–389 (TLQLVRNIIP…RGGGRLPQAL (337 aa)). Phosphotyrosine is present on Tyr85. (6S)-NADPHX is bound by residues Glu153 and 205 to 211 (NHMEFSR). Residues 245-249 (KGERD) and 264-273 (GSSRRCGGQG) contribute to the ATP site. Residue Asp274 participates in (6S)-NADPHX binding. Disordered stretches follow at residues 316-350 (KTRA…PGGC) and 369-389 (RSLH…PQAL).

The protein belongs to the NnrD/CARKD family. The cofactor is Mg(2+).

It is found in the mitochondrion. It carries out the reaction (6S)-NADHX + ATP = ADP + phosphate + NADH + H(+). The catalysed reaction is (6S)-NADPHX + ATP = ADP + phosphate + NADPH + H(+). Catalyzes the dehydration of the S-form of NAD(P)HX at the expense of ATP, which is converted to ADP. Together with NAD(P)HX epimerase, which catalyzes the epimerization of the S- and R-forms, the enzyme allows the repair of both epimers of NAD(P)HX, a damaged form of NAD(P)H that is a result of enzymatic or heat-dependent hydration. This is ATP-dependent (S)-NAD(P)H-hydrate dehydratase from Macaca mulatta (Rhesus macaque).